An 87-amino-acid polypeptide reads, in one-letter code: U3-theraphotoxin-Cg1b (87 aa).

A signal peptide spans 1 to 23 (MRTLTLIAIVTCAALVIFHAAAA). Residues 24-48 (EELEAQDVIQPEDIFTGVATLEEDR) constitute a propeptide that is removed on maturation. 3 cysteine pairs are disulfide-bonded: cysteine 52/cysteine 65, cysteine 56/cysteine 79, and cysteine 73/cysteine 84.

Belongs to the neurotoxin 12 (Hwtx-2) family. 03 (juruin) subfamily. Expressed by the venom gland.

Its subcellular location is the secreted. Probable ion channel inhibitor. In Chilobrachys guangxiensis (Chinese earth tiger tarantula), this protein is U3-theraphotoxin-Cg1b.